Here is a 344-residue protein sequence, read N- to C-terminus: Protein RecA (344 aa).

65–72 (GPESSGKT) is a binding site for ATP. Basic and acidic residues predominate over residues 323–337 (ELREKFQPAEAPREA). The interval 323–344 (ELREKFQPAEAPREAGDDEDKE) is disordered.

This sequence belongs to the RecA family.

It localises to the cytoplasm. In terms of biological role, can catalyze the hydrolysis of ATP in the presence of single-stranded DNA, the ATP-dependent uptake of single-stranded DNA by duplex DNA, and the ATP-dependent hybridization of homologous single-stranded DNAs. It interacts with LexA causing its activation and leading to its autocatalytic cleavage. The polypeptide is Protein RecA (Xanthomonas axonopodis pv. citri (strain 306)).